The primary structure comprises 712 residues: Dynamin-1-like protein drp-1 (712 aa).

Positions 24–304 constitute a Dynamin-type G domain; sequence QIQLPQIVVV…LMHHIRNCLP (281 aa). Residues 34-41 are G1 motif; the sequence is GSQSAGKS. The segment at 60 to 62 is G2 motif; it reads VTR. The G3 motif stretch occupies residues 148–151; the sequence is DLPG. The interval 217 to 220 is G4 motif; sequence TKLD. Residues 247-250 form a G5 motif region; it reads VNRS. Residues 280-502 are interaction with caspase ced-9; that stretch reads SRNGTPYLAK…LAYINTKHPE (223 aa). The segment at 523-542 is disordered; sequence GRSRNRHASTGERAVSAHGE. One can recognise a GED domain in the interval 620–711; it reads VAIIERLIRN…IISEVRETQV (92 aa).

Belongs to the TRAFAC class dynamin-like GTPase superfamily. Dynamin/Fzo/YdjA family. As to quaternary structure, interacts (via residues 280-502) with caspase ced-9; the interaction is enhanced by GTP rather than GDP; the interaction is probably direct and may occur at the mitochondrion. Highly expressed in neurons, in intestinal cells and in the body wall, pharyngeal, and vulval muscles.

The protein resides in the mitochondrion. It is found in the mitochondrion outer membrane. It localises to the cytoplasm. The protein localises to the cytosol. The catalysed reaction is GTP + H2O = GDP + phosphate + H(+). With respect to regulation, GTPase activity is increased by binding to phospholipid membranes. Its function is as follows. Functions in mitochondrial division. Functions in peroxisomal division. Mediates membrane fission, perhaps mainly of the mitochondrial outer membrane. Mitochondrial fission may be promoted by recruitment to mitochondrial membranes via the egl-1/ced-9 complex. Involved in the coordination of mitochondrial division with autophagy in response to acute heat stress during larval development. Plays a role in apoptosis by promoting mitochondrial elimination and cell-death execution, acting downstream of caspase ced-3, and perhaps independently of FIS1-related protein fis-2, caspase ced-9 and apoptosis-inducing factor AIFM/wah-1. Role in promoting apoptosis dependent upon cleavage of drp-1 by ced-3. Involved in negatively modulating longevity in concert with the Insulin/IGF-1-like signaling (IIS) mediated pathway. The sequence is that of Dynamin-1-like protein drp-1 from Caenorhabditis elegans.